The following is a 400-amino-acid chain: Serine/threonine transporter SstT (400 aa).

Transmembrane regions (helical) follow at residues 9–29 (LVTQIAIAVVIGIVLAAVWPA), 36–56 (ILGSLFISALKAVAPVLVFVL), 75–95 (VLVLYAVGTLAAATVGVVASM), 134–154 (ALLEANYIGILAWAIALGLAL), 175–195 (VIQLVIRLAPLGILGLVASTF), 209–229 (LLAVLLGCMLFVALVVNPLIV), 281–301 (IAIPLGATINMAGAAITISVL), 323–343 (VVASLCACGASGVAGGSLLLI), and 349–369 (LFGIGNDVAMQVVAIGFIIGI).

This sequence belongs to the dicarboxylate/amino acid:cation symporter (DAACS) (TC 2.A.23) family.

The protein localises to the cell inner membrane. The enzyme catalyses L-serine(in) + Na(+)(in) = L-serine(out) + Na(+)(out). It catalyses the reaction L-threonine(in) + Na(+)(in) = L-threonine(out) + Na(+)(out). Involved in the import of serine and threonine into the cell, with the concomitant import of sodium (symport system). The polypeptide is Serine/threonine transporter SstT (Acidovorax sp. (strain JS42)).